A 267-amino-acid polypeptide reads, in one-letter code: 5'-nucleotidase SurE (267 aa).

A divalent metal cation contacts are provided by D9, D10, S40, and N97.

This sequence belongs to the SurE nucleotidase family. A divalent metal cation is required as a cofactor.

The protein localises to the cytoplasm. The catalysed reaction is a ribonucleoside 5'-phosphate + H2O = a ribonucleoside + phosphate. Functionally, nucleotidase that shows phosphatase activity on nucleoside 5'-monophosphates. The sequence is that of 5'-nucleotidase SurE from Helicobacter pylori (strain ATCC 700392 / 26695) (Campylobacter pylori).